We begin with the raw amino-acid sequence, 221 residues long: Deoxyribose-phosphate aldolase (221 aa).

Catalysis depends on aspartate 89, which acts as the Proton donor/acceptor. The Schiff-base intermediate with acetaldehyde role is filled by lysine 151. The Proton donor/acceptor role is filled by lysine 180.

It belongs to the DeoC/FbaB aldolase family. DeoC type 1 subfamily.

It localises to the cytoplasm. It catalyses the reaction 2-deoxy-D-ribose 5-phosphate = D-glyceraldehyde 3-phosphate + acetaldehyde. Its pathway is carbohydrate degradation; 2-deoxy-D-ribose 1-phosphate degradation; D-glyceraldehyde 3-phosphate and acetaldehyde from 2-deoxy-alpha-D-ribose 1-phosphate: step 2/2. Its function is as follows. Catalyzes a reversible aldol reaction between acetaldehyde and D-glyceraldehyde 3-phosphate to generate 2-deoxy-D-ribose 5-phosphate. This Mesomycoplasma hyopneumoniae (strain J / ATCC 25934 / NCTC 10110) (Mycoplasma hyopneumoniae) protein is Deoxyribose-phosphate aldolase.